Reading from the N-terminus, the 1070-residue chain is DNA-directed RNA polymerase subunit beta (1070 aa).

This sequence belongs to the RNA polymerase beta chain family. In terms of assembly, in plastids the minimal PEP RNA polymerase catalytic core is composed of four subunits: alpha, beta, beta', and beta''. When a (nuclear-encoded) sigma factor is associated with the core the holoenzyme is formed, which can initiate transcription.

Its subcellular location is the plastid. The protein localises to the chloroplast. It carries out the reaction RNA(n) + a ribonucleoside 5'-triphosphate = RNA(n+1) + diphosphate. In terms of biological role, DNA-dependent RNA polymerase catalyzes the transcription of DNA into RNA using the four ribonucleoside triphosphates as substrates. This chain is DNA-directed RNA polymerase subunit beta, found in Populus trichocarpa (Western balsam poplar).